The chain runs to 140 residues: Putative pre-16S rRNA nuclease (140 aa).

Belongs to the YqgF nuclease family.

It localises to the cytoplasm. In terms of biological role, could be a nuclease involved in processing of the 5'-end of pre-16S rRNA. The polypeptide is Putative pre-16S rRNA nuclease (Aeromonas salmonicida (strain A449)).